The chain runs to 180 residues: NADH-quinone oxidoreductase subunit I 1 (180 aa).

4Fe-4S ferredoxin-type domains lie at 50–80 (LSRD…LQKT) and 90–119 (EFFR…LTPD). Residues C60, C63, C66, C70, C99, C102, C105, and C109 each contribute to the [4Fe-4S] cluster site.

It belongs to the complex I 23 kDa subunit family. NDH-1 is composed of 14 different subunits. Subunits NuoA, H, J, K, L, M, N constitute the membrane sector of the complex. The cofactor is [4Fe-4S] cluster.

It is found in the cell inner membrane. It carries out the reaction a quinone + NADH + 5 H(+)(in) = a quinol + NAD(+) + 4 H(+)(out). In terms of biological role, NDH-1 shuttles electrons from NADH, via FMN and iron-sulfur (Fe-S) centers, to quinones in the respiratory chain. The immediate electron acceptor for the enzyme in this species is believed to be ubiquinone. Couples the redox reaction to proton translocation (for every two electrons transferred, four hydrogen ions are translocated across the cytoplasmic membrane), and thus conserves the redox energy in a proton gradient. This chain is NADH-quinone oxidoreductase subunit I 1, found in Nitrosococcus oceani (strain ATCC 19707 / BCRC 17464 / JCM 30415 / NCIMB 11848 / C-107).